Consider the following 456-residue polypeptide: Non-structural protein V (456 aa).

Residues 53-92 are disordered; it reads SGESEQVEGGMSKDDGDVERRNLEDLSSTSPTDGTIGKRV. The span at 63-76 shows a compositional bias: basic and acidic residues; that stretch reads MSKDDGDVERRNLE. Ser257 is modified (phosphoserine; by host). The segment at 265-324 is disordered; that stretch reads ISPEDEEPSSVGGKPNESIGRTIEGQSIRDNLQAKDNKSTDVPGAGPKDSAVKEEPPQKR. Position 350 is a phosphoserine; by host (Ser350). The Zn(2+) site is built by His408, Cys427, Cys431, Cys443, Cys445, Cys448, Cys452, and Cys455.

This sequence belongs to the paramyxoviruses V protein family. In terms of assembly, interacts with host IFIH1/MDA5, DHX58/LGP2, STAT1 and STAT2. Interacts (via N-terminus) with host UBXN1 (via C-terminal UBX domain); this interaction inhibits interferon-alpha/beta (IFN-alpha/beta) production. Interacts with host RIGI regulatory protein (via CARDs domain) and host TRIM25 (via SPRY domain); these interactions prevent TRIM25-mediated ubiquitination of RIG-I and disrupts downstream RIG-I signaling.

The protein localises to the host cytoplasm. Plays an essential role in the inhibition of host immune response. Prevents the establishment of cellular antiviral state by blocking interferon-alpha/beta (IFN-alpha/beta) production and signaling pathway. Interacts with host IFIH1/MDA5 and DHX58/LGP2 to inhibit the transduction pathway involved in the activation of IFN-beta promoter, thus protecting the virus against cell antiviral state. Blocks the type I interferon signaling pathway by interacting with host STAT1 and STAT2 and thereby inhibiting their phosphorylation and subsequent nuclear translocation. Efficiently blocks the type II interferon signaling pathway. Suppresses interferon induction by interacting with and stabilizing host UBXN1, a negative regulator of both RIG-I-like receptors (RLR) and NF-kappa-B pathways. Blocks the type I interferon signaling pathway by disrupting the RIG-I signaling pathway. The protein is Non-structural protein V (P/V/C) of Cynopterus brachyotis (Lesser short-nosed fruit bat).